The primary structure comprises 129 residues: Small ribosomal subunit protein uS13 (129 aa).

The segment covering 92-114 (HKHNLPVRGQRTKTNARTRRGPR) has biased composition (basic residues). The interval 92–129 (HKHNLPVRGQRTKTNARTRRGPRKTVAGRGQKRGATKK) is disordered.

It belongs to the universal ribosomal protein uS13 family. As to quaternary structure, part of the 30S ribosomal subunit. Forms a loose heterodimer with protein S19. Forms two bridges to the 50S subunit in the 70S ribosome.

Its function is as follows. Located at the top of the head of the 30S subunit, it contacts several helices of the 16S rRNA. In the 70S ribosome it contacts the 23S rRNA (bridge B1a) and protein L5 of the 50S subunit (bridge B1b), connecting the 2 subunits; these bridges are implicated in subunit movement. Contacts the tRNAs in the A and P-sites. The chain is Small ribosomal subunit protein uS13 from Dehalococcoides mccartyi (strain ATCC BAA-2266 / KCTC 15142 / 195) (Dehalococcoides ethenogenes (strain 195)).